The sequence spans 338 residues: Lipoate-protein ligase A (338 aa).

In terms of domain architecture, BPL/LPL catalytic spans 29–216; that stretch reads PATQRVLFLW…AFFAHYGERV (188 aa). ATP-binding positions include Arg71, 76 to 79, and Lys134; that span reads GAVF. Lys134 contributes to the (R)-lipoate binding site.

This sequence belongs to the LplA family. In terms of assembly, monomer.

It is found in the cytoplasm. The catalysed reaction is L-lysyl-[lipoyl-carrier protein] + (R)-lipoate + ATP = N(6)-[(R)-lipoyl]-L-lysyl-[lipoyl-carrier protein] + AMP + diphosphate + H(+). Its pathway is protein modification; protein lipoylation via exogenous pathway; protein N(6)-(lipoyl)lysine from lipoate: step 1/2. It participates in protein modification; protein lipoylation via exogenous pathway; protein N(6)-(lipoyl)lysine from lipoate: step 2/2. Functionally, catalyzes both the ATP-dependent activation of exogenously supplied lipoate to lipoyl-AMP and the transfer of the activated lipoyl onto the lipoyl domains of lipoate-dependent enzymes. This Salmonella paratyphi B (strain ATCC BAA-1250 / SPB7) protein is Lipoate-protein ligase A.